A 332-amino-acid chain; its full sequence is Anthranilate phosphoribosyltransferase (332 aa).

Residues G79, 82-83 (GD), T87, 89-92 (NIST), 107-115 (KHGNYGATS), and A119 each bind 5-phospho-alpha-D-ribose 1-diphosphate. G79 contacts anthranilate. S91 provides a ligand contact to Mg(2+). N110 serves as a coordination point for anthranilate. R165 provides a ligand contact to anthranilate. The Mg(2+) site is built by D223 and E224.

This sequence belongs to the anthranilate phosphoribosyltransferase family. As to quaternary structure, homodimer. Mg(2+) serves as cofactor.

The catalysed reaction is N-(5-phospho-beta-D-ribosyl)anthranilate + diphosphate = 5-phospho-alpha-D-ribose 1-diphosphate + anthranilate. It functions in the pathway amino-acid biosynthesis; L-tryptophan biosynthesis; L-tryptophan from chorismate: step 2/5. Its function is as follows. Catalyzes the transfer of the phosphoribosyl group of 5-phosphorylribose-1-pyrophosphate (PRPP) to anthranilate to yield N-(5'-phosphoribosyl)-anthranilate (PRA). The polypeptide is Anthranilate phosphoribosyltransferase (Bacteroides thetaiotaomicron (strain ATCC 29148 / DSM 2079 / JCM 5827 / CCUG 10774 / NCTC 10582 / VPI-5482 / E50)).